A 141-amino-acid polypeptide reads, in one-letter code: Nucleoside diphosphate kinase (141 aa).

ATP is bound by residues Lys11, Phe59, Arg87, Thr93, Arg104, and Asn114. The active-site Pros-phosphohistidine intermediate is the His117.

This sequence belongs to the NDK family. In terms of assembly, homotetramer. Requires Mg(2+) as cofactor.

It localises to the cytoplasm. It carries out the reaction a 2'-deoxyribonucleoside 5'-diphosphate + ATP = a 2'-deoxyribonucleoside 5'-triphosphate + ADP. The enzyme catalyses a ribonucleoside 5'-diphosphate + ATP = a ribonucleoside 5'-triphosphate + ADP. Major role in the synthesis of nucleoside triphosphates other than ATP. The ATP gamma phosphate is transferred to the NDP beta phosphate via a ping-pong mechanism, using a phosphorylated active-site intermediate. The protein is Nucleoside diphosphate kinase of Acidovorax sp. (strain JS42).